Reading from the N-terminus, the 34-residue chain is Delta-theraphotoxin-Hm1b (34 aa).

Cystine bridges form between cysteine 2-cysteine 16, cysteine 9-cysteine 21, and cysteine 15-cysteine 28. Residue phenylalanine 34 is modified to Phenylalanine amide.

This sequence belongs to the neurotoxin 10 (Hwtx-1) family. 09 (HaTx) subfamily. As to expression, expressed by the venom gland.

The protein resides in the secreted. Its function is as follows. Gating-modifier toxin that potently and selectively acts on Nav1.1/SCN1A and Nav1.3/SCN3A. It enhances hNav1.1/SCN1A currents and delays fast inactivation of the channel (EC(50)=11.6 nM), leading to a sustained current. Similar effects are observed at Nav1.3/SCN3A (EC(50)=11.8 nM), but with less sustained currents. When tested on Nav1.2/SCN2A, the native toxin decreases the peak current by 50% at saturating concentration, whereas the recombinant toxin only shows a weak decrease of peak current. The native toxin specifically activates the voltage-gated sodium channel Nav1.1/SCN1A in somatosensory neurons to elicit acute pain and mechanical allodynia. When tested on Nav1.1/SCN1A, the toxin induces a hyperpolarising shift of the voltage-dependence of steady-state activation, and induces a depolarizing shift in the voltage dependence of inactivation. In addition, it does not modify the recovery from fast inactivation in Nav1.1/SCN1A. The toxin hydrophobic face probably interacts with the domain IV voltage-sensor of Nav1.1/SCN1A and Nav1.3/SCN3A and may trap the voltage-sensing S4 helix in a partially activated state. In vivo, intracerebroventricular injection into mice elicits convulsions, spasms, tremors and rapid death. When injected into mouse hindpaw, the toxin elicits an immediate and robust response to pain. However, intraplantar injection of toxin does not cause neurogenic inflammation or alter sensitivity to heat, indicative of a modality-specific effect on mechanosensitive neurons. The sequence is that of Delta-theraphotoxin-Hm1b from Heteroscodra maculata (Togo starburst tarantula).